Consider the following 143-residue polypeptide: Large ribosomal subunit protein uL11 (143 aa).

Belongs to the universal ribosomal protein uL11 family. In terms of assembly, part of the ribosomal stalk of the 50S ribosomal subunit. Interacts with L10 and the large rRNA to form the base of the stalk. L10 forms an elongated spine to which L12 dimers bind in a sequential fashion forming a multimeric L10(L12)X complex. One or more lysine residues are methylated.

Forms part of the ribosomal stalk which helps the ribosome interact with GTP-bound translation factors. This is Large ribosomal subunit protein uL11 from Halorhodospira halophila (strain DSM 244 / SL1) (Ectothiorhodospira halophila (strain DSM 244 / SL1)).